A 247-amino-acid polypeptide reads, in one-letter code: Protein At-4/1 (247 aa).

Coiled-coil stretches lie at residues 39 to 126 (VESS…YKIR) and 182 to 247 (LLME…LSSS).

As to quaternary structure, interacts with viral tomato spotted wilt virus (TSWV) movement protein NSM, which is involved in cell-to cell spread of viral genome and enlargement of the host plasmodesmata size exclusion limit (SEL). As to expression, expressed in leaves (at protein level).

The protein localises to the endoplasmic reticulum. It is found in the cell junction. Its subcellular location is the plasmodesma. In terms of biological role, involved in intra- and inter-cellular trafficking through plasmodesmata (PD). This is Protein At-4/1 from Arabidopsis thaliana (Mouse-ear cress).